A 447-amino-acid polypeptide reads, in one-letter code: MTITASNTLEFKWTSPRSSRSSFRTTTDAEQKISIDMSNTYCDQVLGPLYSYMMVLGLNHTHSSARNTMFKWPLTIYNYLTLAILTAATIRRISQIKQKSATNEEKDAAFHVLNPTFVLTLCHALLMFSGLAAGFLLLKLQKQREKMYHVLDQGLGRNRNEEHDSHHFKLNKLFISISFSFAAALSFVQIATKMRYLDLPDTPDLINRKIYFVILEGYVIFIASSCISLVAILFFQLCRILQFSIGQLIEEMVPKEKEECPLPEQSLQQIHDVQIHYQEISNAKLYIEQNFSFSLFYTYGCCIPLTCLLGYIAFRNGIQADMAETFSVAIWLTNTMLALMLFSIPAFMIAEEGDKLLTASFKMYHETLCEERDLLVLSQMSFLSFQMHATKLTLTAGNFFMMNRKIMISLFSAIFTYFLILVQFDAEKERAGECNNQSRVLIVQPPV.

Topologically, residues 1–69 (MTITASNTLE…HTHSSARNTM (69 aa)) are extracellular. A helical transmembrane segment spans residues 70 to 90 (FKWPLTIYNYLTLAILTAATI). Residues 91–116 (RRISQIKQKSATNEEKDAAFHVLNPT) lie on the Cytoplasmic side of the membrane. A helical membrane pass occupies residues 117-137 (FVLTLCHALLMFSGLAAGFLL). Topologically, residues 138 to 171 (LKLQKQREKMYHVLDQGLGRNRNEEHDSHHFKLN) are extracellular. The helical transmembrane segment at 172 to 192 (KLFISISFSFAAALSFVQIAT) threads the bilayer. Residues 193–211 (KMRYLDLPDTPDLINRKIY) lie on the Cytoplasmic side of the membrane. Residues 212–232 (FVILEGYVIFIASSCISLVAI) traverse the membrane as a helical segment. The Extracellular segment spans residues 233 to 292 (LFFQLCRILQFSIGQLIEEMVPKEKEECPLPEQSLQQIHDVQIHYQEISNAKLYIEQNFS). Residues 293-313 (FSLFYTYGCCIPLTCLLGYIA) traverse the membrane as a helical segment. Over 314 to 328 (FRNGIQADMAETFSV) the chain is Cytoplasmic. A helical transmembrane segment spans residues 329-349 (AIWLTNTMLALMLFSIPAFMI). Residues 350–405 (AEEGDKLLTASFKMYHETLCEERDLLVLSQMSFLSFQMHATKLTLTAGNFFMMNRK) lie on the Extracellular side of the membrane. A helical membrane pass occupies residues 406–426 (IMISLFSAIFTYFLILVQFDA). The Cytoplasmic portion of the chain corresponds to 427-447 (EKERAGECNNQSRVLIVQPPV).

Belongs to the insect chemoreceptor superfamily. Gustatory receptor (GR) family. In terms of tissue distribution, expressed in I2 pharyngeal neurons.

The protein resides in the membrane. In terms of biological role, chemoreceptor involved in light-induced avoidance behavior. Probably acts as a molecular sensor in I2 pharyngeal neurons, required for the inhibition of feeding in response to light and hydrogen peroxide. Involved in circadian rhythms, probably by acting as a light sensor. In contrast to lite-1, does not act as a photoreceptor. The sequence is that of Gustatory receptor family protein 3 from Caenorhabditis elegans.